The sequence spans 515 residues: Cytidine and dCMP deaminase domain-containing protein 1 (515 aa).

Polar residues-rich tracts occupy residues Met-1–Glu-11 and Ser-18–Thr-27. Disordered regions lie at residues Met-1–Thr-27 and Arg-56–Lys-83. Basic and acidic residues predominate over residues Gln-60–Lys-83. A CMP/dCMP-type deaminase 1 domain is found at Gly-71 to Glu-169. Positions 110, 135, and 138 each coordinate Zn(2+). The Nuclear export signal signature appears at Asn-272–Leu-284. Residues Glu-318–Glu-483 enclose the CMP/dCMP-type deaminase 2 domain. His-399 provides a ligand contact to Zn(2+). Glu-401 acts as the Proton donor in catalysis. Residues Cys-427 and Cys-430 each coordinate Zn(2+). The interval Gly-481–His-515 is disordered. Residues Glu-486–His-515 show a composition bias toward basic and acidic residues. The Bipartite nuclear localization signal signature appears at Arg-489–Arg-511.

It belongs to the cytidine and deoxycytidylate deaminase family. The cofactor is Zn(2+).

It localises to the cytoplasm. The protein resides in the nucleus. It carries out the reaction 2'-deoxycytidine + H2O + H(+) = 2'-deoxyuridine + NH4(+). It catalyses the reaction cytidine + H2O + H(+) = uridine + NH4(+). In terms of biological role, catalyzes the deamination of cytidine and deoxycytidine into uridine and deoxyuridine, respectively. May play an important role in testicular development and spermatogenesis. The chain is Cytidine and dCMP deaminase domain-containing protein 1 (CDADC1) from Macaca fascicularis (Crab-eating macaque).